A 307-amino-acid chain; its full sequence is Acyl transferase (307 aa).

Residues serine 116, aspartate 213, and histidine 243 each act as charge relay system in the active site.

Belongs to the LuxD family.

Its pathway is lipid metabolism; fatty acid reduction for biolumincescence. Functionally, acyl transferase is part of the fatty acid reductase system required for aldehyde biosynthesis; it produces fatty acids for the luminescent reaction. In Photorhabdus luminescens (Xenorhabdus luminescens), this protein is Acyl transferase.